A 730-amino-acid polypeptide reads, in one-letter code: Translation factor GUF1 homolog, mitochondrial (730 aa).

One can recognise a tr-type G domain in the interval 106–289; sequence ELIRNFCIIA…AVVVSIPPPK (184 aa). Residues 115-122, 182-186, and 236-239 each bind GTP; these read AHVDHGKS, DTPGH, and NKID.

The protein belongs to the TRAFAC class translation factor GTPase superfamily. Classic translation factor GTPase family. LepA subfamily.

The protein localises to the mitochondrion inner membrane. The catalysed reaction is GTP + H2O = GDP + phosphate + H(+). Promotes mitochondrial protein synthesis. May act as a fidelity factor of the translation reaction, by catalyzing a one-codon backward translocation of tRNAs on improperly translocated ribosomes. Binds to mitochondrial ribosomes in a GTP-dependent manner. The sequence is that of Translation factor GUF1 homolog, mitochondrial from Theileria annulata.